Reading from the N-terminus, the 986-residue chain is P3N-PIPO polyprotein (986 aa).

Positions 141–284 (KLTEGQMNHL…QSILNSMIQF (144 aa)) constitute a Peptidase S30 domain. Active-site for P1 proteinase activity residues include histidine 192, aspartate 201, and serine 235. The Involved in interaction with stylet and aphid transmission motif lies at 334–337 (KITC). The Involved in virions binding and aphid transmission motif lies at 592 to 594 (PTK). The 123-residue stretch at 618-740 (LYIAKQGYCY…ESDIKHYRVG (123 aa)) folds into the Peptidase C6 domain. Residues cysteine 626 and histidine 699 each act as for helper component proteinase activity in the active site.

This sequence belongs to the potyviridae P3N-PIPO polyprotein family. As to quaternary structure, interacts (via PIPO domain) with host PCaP1 protein; this interaction may help to anchor the movement complex to the plasma membrane from which the complex could move to the plasmodesmata. In terms of processing, potyviral RNA is expressed as two polyproteins which undergo post-translational proteolytic processing. Genome polyprotein is processed by NIa-pro, P1 and HC-pro proteinases resulting in the production of at least ten individual proteins. P3N-PIPO is cleaved by P1 and HC-pro proteinases resulting in the production of three individual proteins. The P1 proteinase and the HC-pro cleave only their respective C-termini autocatalytically.

Its subcellular location is the host cell junction. The protein localises to the host plasmodesma. It catalyses the reaction Hydrolyzes a Gly-|-Gly bond at its own C-terminus, commonly in the sequence -Tyr-Xaa-Val-Gly-|-Gly, in the processing of the potyviral polyprotein.. In terms of biological role, required for aphid transmission and also has proteolytic activity. Only cleaves a Gly-Gly dipeptide at its own C-terminus. Interacts with virions and aphid stylets. Acts as a suppressor of RNA-mediated gene silencing, also known as post-transcriptional gene silencing (PTGS), a mechanism of plant viral defense that limits the accumulation of viral RNAs. May have RNA-binding activity. Allows efficient cell to cell propagation, by bypassing the host cell wall barrier. Transports viral genome to neighboring plant cells directly through plasmosdesmata, without any budding. This Potato virus Y (strain N) (PVY) protein is P3N-PIPO polyprotein.